The primary structure comprises 504 residues: Arabinose import ATP-binding protein AraG (504 aa).

ABC transporter domains follow at residues 8-243 (LSFR…MVGR) and 256-499 (YGEE…MPKV). An ATP-binding site is contributed by 40 to 47 (GENGAGKS).

The protein belongs to the ABC transporter superfamily. Arabinose importer (TC 3.A.1.2.2) family. The complex is composed of two ATP-binding proteins (AraG), two transmembrane proteins (AraH) and a solute-binding protein (AraF).

The protein localises to the cell inner membrane. It carries out the reaction L-arabinose(out) + ATP + H2O = L-arabinose(in) + ADP + phosphate + H(+). In terms of biological role, part of the ABC transporter complex AraFGH involved in arabinose import. Responsible for energy coupling to the transport system. This Shigella flexneri protein is Arabinose import ATP-binding protein AraG.